We begin with the raw amino-acid sequence, 949 residues long: Bifunctional uridylyltransferase/uridylyl-removing enzyme (949 aa).

Positions Met1 to Ser37 are disordered. Residues Met1–Pro395 form a uridylyltransferase region. A uridylyl-removing region spans residues Gly396 to Thr756. The HD domain occupies Val516 to Pro632. ACT domains lie at Glu757–Arg834 and Val870–Ser949.

It belongs to the GlnD family. It depends on Mg(2+) as a cofactor.

The catalysed reaction is [protein-PII]-L-tyrosine + UTP = [protein-PII]-uridylyl-L-tyrosine + diphosphate. It catalyses the reaction [protein-PII]-uridylyl-L-tyrosine + H2O = [protein-PII]-L-tyrosine + UMP + H(+). Uridylyltransferase (UTase) activity is inhibited by glutamine, while glutamine activates uridylyl-removing (UR) activity. Functionally, modifies, by uridylylation and deuridylylation, the PII regulatory proteins (GlnB and homologs), in response to the nitrogen status of the cell that GlnD senses through the glutamine level. Under low glutamine levels, catalyzes the conversion of the PII proteins and UTP to PII-UMP and PPi, while under higher glutamine levels, GlnD hydrolyzes PII-UMP to PII and UMP (deuridylylation). Thus, controls uridylylation state and activity of the PII proteins, and plays an important role in the regulation of nitrogen assimilation and metabolism. The polypeptide is Bifunctional uridylyltransferase/uridylyl-removing enzyme (Gluconobacter oxydans (strain 621H) (Gluconobacter suboxydans)).